The following is a 629-amino-acid chain: tRNA uridine 5-carboxymethylaminomethyl modification enzyme MnmG (629 aa).

13–18 (GGGHAG) serves as a coordination point for FAD. 273 to 287 (GPRYCPSIEDKIHRF) provides a ligand contact to NAD(+).

This sequence belongs to the MnmG family. In terms of assembly, homodimer. Heterotetramer of two MnmE and two MnmG subunits. FAD serves as cofactor.

Its subcellular location is the cytoplasm. Its function is as follows. NAD-binding protein involved in the addition of a carboxymethylaminomethyl (cmnm) group at the wobble position (U34) of certain tRNAs, forming tRNA-cmnm(5)s(2)U34. The protein is tRNA uridine 5-carboxymethylaminomethyl modification enzyme MnmG of Shewanella denitrificans (strain OS217 / ATCC BAA-1090 / DSM 15013).